We begin with the raw amino-acid sequence, 225 residues long: Uracil-DNA glycosylase (225 aa).

The active-site Proton acceptor is Asp65.

Belongs to the uracil-DNA glycosylase (UDG) superfamily. UNG family.

It localises to the cytoplasm. It catalyses the reaction Hydrolyzes single-stranded DNA or mismatched double-stranded DNA and polynucleotides, releasing free uracil.. Its function is as follows. Excises uracil residues from the DNA which can arise as a result of misincorporation of dUMP residues by DNA polymerase or due to deamination of cytosine. This Clostridium perfringens (strain 13 / Type A) protein is Uracil-DNA glycosylase.